A 60-amino-acid polypeptide reads, in one-letter code: Insect toxin mu-NPTX-Nc1a (60 aa).

The N-terminal stretch at 1–19 is a signal peptide; that stretch reads MIYQVVLLLLVSPAPVSAA.

Contains 4 disulfide bonds. As to expression, expressed by the venom gland.

Its subcellular location is the secreted. Insect-specific toxin. Blocks voltage-gated potassium and sodium channels. The sequence is that of Insect toxin mu-NPTX-Nc1a from Trichonephila clavata (Joro spider).